Reading from the N-terminus, the 312-residue chain is MAEITASLVKELREKTGAGMMDCKKALGETAGDVEAAIDWLRKKGLAAAAKKAGRVAAEGLVGIAAAGTKGVAVEVNAETDFVARNDQFQGFVASVAAVALDKGADVEAIKAAACPGTDKNVADQLTHLIATIGENMSLRRAVRLEVSAGVVASYVHTAIAPGLGKIGCLVALESTGNVDRLNEVGKQIAMHVAAANPLFLDPSVVDTSALDRERNVLTEQAQASGKPAAVIEKMVEGRIRKYYEEVCLSEQVFVIDQENKISKVLENLGKEIGAPVKLAGFARFALGEGIEKEVSDFAAEVAAQAGTRPAG.

Positions 80-83 (TDFV) are involved in Mg(2+) ion dislocation from EF-Tu.

This sequence belongs to the EF-Ts family.

It is found in the cytoplasm. Its function is as follows. Associates with the EF-Tu.GDP complex and induces the exchange of GDP to GTP. It remains bound to the aminoacyl-tRNA.EF-Tu.GTP complex up to the GTP hydrolysis stage on the ribosome. The sequence is that of Elongation factor Ts from Paramagnetospirillum magneticum (strain ATCC 700264 / AMB-1) (Magnetospirillum magneticum).